The following is a 402-amino-acid chain: Endo-polygalacturonase (402 aa).

A signal peptide spans 1–23; sequence MEYQSGKRVLSLSLGLIGLFSAS. Intrachain disulfides connect C41/C62 and C115/C125. D249 (proton donor) is an active-site residue. The active site involves H277.

It belongs to the glycosyl hydrolase 28 family. In terms of assembly, monomer.

Its subcellular location is the secreted. It catalyses the reaction (1,4-alpha-D-galacturonosyl)n+m + H2O = (1,4-alpha-D-galacturonosyl)n + (1,4-alpha-D-galacturonosyl)m.. Its function is as follows. Involved in maceration and soft-rotting of plant tissue. The polypeptide is Endo-polygalacturonase (pehA) (Pectobacterium parmentieri).